We begin with the raw amino-acid sequence, 120 residues long: MIMPQTRLVVADNTGAKEIMCFRILGKKKVAQVGDIIVASVKEAVPRSNIKKGDVVYAVVIRTKRTIKRKDGSCVRFDDNAAVIIDKEGNPRGTRVFGPVARELRDKNFMKIISLATEVI.

The protein belongs to the universal ribosomal protein uL14 family. Part of the 50S ribosomal subunit. Forms a cluster with proteins L3 and L19. In the 70S ribosome, L14 and L19 interact and together make contacts with the 16S rRNA in bridges B5 and B8.

Its function is as follows. Binds to 23S rRNA. Forms part of two intersubunit bridges in the 70S ribosome. The protein is Large ribosomal subunit protein uL14 of Dictyoglomus turgidum (strain DSM 6724 / Z-1310).